A 290-amino-acid chain; its full sequence is Release factor glutamine methyltransferase (290 aa).

S-adenosyl-L-methionine contacts are provided by Asp140 and Asn181. 181–184 contributes to the substrate binding site; the sequence is NPPY.

This sequence belongs to the protein N5-glutamine methyltransferase family. PrmC subfamily.

The enzyme catalyses L-glutaminyl-[peptide chain release factor] + S-adenosyl-L-methionine = N(5)-methyl-L-glutaminyl-[peptide chain release factor] + S-adenosyl-L-homocysteine + H(+). Methylates the class 1 translation termination release factors RF1/PrfA and RF2/PrfB on the glutamine residue of the universally conserved GGQ motif. The chain is Release factor glutamine methyltransferase from Chlamydia trachomatis serovar D (strain ATCC VR-885 / DSM 19411 / UW-3/Cx).